Reading from the N-terminus, the 668-residue chain is DNA ligase (668 aa).

NAD(+) is bound by residues D34–D38, S83–L84, and E117. K119 acts as the N6-AMP-lysine intermediate in catalysis. Positions 140, 177, 293, and 317 each coordinate NAD(+). Zn(2+) contacts are provided by C411, C414, C429, and C434. The BRCT domain maps to R591–Q668.

The protein belongs to the NAD-dependent DNA ligase family. LigA subfamily. Requires Mg(2+) as cofactor. Mn(2+) serves as cofactor.

It carries out the reaction NAD(+) + (deoxyribonucleotide)n-3'-hydroxyl + 5'-phospho-(deoxyribonucleotide)m = (deoxyribonucleotide)n+m + AMP + beta-nicotinamide D-nucleotide.. Functionally, DNA ligase that catalyzes the formation of phosphodiester linkages between 5'-phosphoryl and 3'-hydroxyl groups in double-stranded DNA using NAD as a coenzyme and as the energy source for the reaction. It is essential for DNA replication and repair of damaged DNA. The protein is DNA ligase of Citrifermentans bemidjiense (strain ATCC BAA-1014 / DSM 16622 / JCM 12645 / Bem) (Geobacter bemidjiensis).